Reading from the N-terminus, the 262-residue chain is Hydroxyethylthiazole kinase (262 aa).

Residue Met50 participates in substrate binding. Arg125 and Thr171 together coordinate ATP. Substrate is bound at residue Gly198.

Belongs to the Thz kinase family. Mg(2+) is required as a cofactor.

It catalyses the reaction 5-(2-hydroxyethyl)-4-methylthiazole + ATP = 4-methyl-5-(2-phosphooxyethyl)-thiazole + ADP + H(+). It functions in the pathway cofactor biosynthesis; thiamine diphosphate biosynthesis; 4-methyl-5-(2-phosphoethyl)-thiazole from 5-(2-hydroxyethyl)-4-methylthiazole: step 1/1. Functionally, catalyzes the phosphorylation of the hydroxyl group of 4-methyl-5-beta-hydroxyethylthiazole (THZ). The protein is Hydroxyethylthiazole kinase of Escherichia coli O81 (strain ED1a).